The chain runs to 157 residues: Ribosomal RNA large subunit methyltransferase H (157 aa).

S-adenosyl-L-methionine is bound by residues leucine 73, glycine 105, and leucine 124–phenylalanine 129.

The protein belongs to the RNA methyltransferase RlmH family. As to quaternary structure, homodimer.

Its subcellular location is the cytoplasm. The enzyme catalyses pseudouridine(1915) in 23S rRNA + S-adenosyl-L-methionine = N(3)-methylpseudouridine(1915) in 23S rRNA + S-adenosyl-L-homocysteine + H(+). Functionally, specifically methylates the pseudouridine at position 1915 (m3Psi1915) in 23S rRNA. The chain is Ribosomal RNA large subunit methyltransferase H from Porphyromonas gingivalis (strain ATCC 33277 / DSM 20709 / CIP 103683 / JCM 12257 / NCTC 11834 / 2561).